The sequence spans 95 residues: Small ribosomal subunit protein uS19 (95 aa).

It belongs to the universal ribosomal protein uS19 family.

Functionally, protein S19 forms a complex with S13 that binds strongly to the 16S ribosomal RNA. The polypeptide is Small ribosomal subunit protein uS19 (Thermosipho africanus (strain TCF52B)).